Here is a 141-residue protein sequence, read N- to C-terminus: Endoribonuclease YbeY (141 aa).

Zn(2+) is bound by residues histidine 105, histidine 109, and aspartate 115.

The protein belongs to the endoribonuclease YbeY family. Requires Zn(2+) as cofactor.

The protein localises to the cytoplasm. Functionally, single strand-specific metallo-endoribonuclease involved in late-stage 70S ribosome quality control and in maturation of the 3' terminus of the 16S rRNA. This chain is Endoribonuclease YbeY, found in Chlorobaculum parvum (strain DSM 263 / NCIMB 8327) (Chlorobium vibrioforme subsp. thiosulfatophilum).